The following is a 589-amino-acid chain: Arginine--tRNA ligase (589 aa).

The 'HIGH' region signature appears at 123-133; that stretch reads ANVAKPMHVGH.

It belongs to the class-I aminoacyl-tRNA synthetase family. In terms of assembly, monomer.

Its subcellular location is the cytoplasm. It carries out the reaction tRNA(Arg) + L-arginine + ATP = L-arginyl-tRNA(Arg) + AMP + diphosphate. This Hyphomonas neptunium (strain ATCC 15444) protein is Arginine--tRNA ligase.